Reading from the N-terminus, the 451-residue chain is Tubulin alpha-1 chain (451 aa).

Q11 serves as a coordination point for GTP. An N6-acetyllysine modification is found at K40. Positions 71, 144, 145, 179, 206, and 228 each coordinate GTP. A Mg(2+)-binding site is contributed by E71. E254 is an active-site residue.

This sequence belongs to the tubulin family. In terms of assembly, dimer of alpha and beta chains. A typical microtubule is a hollow water-filled tube with an outer diameter of 25 nm and an inner diameter of 15 nM. Alpha-beta heterodimers associate head-to-tail to form protofilaments running lengthwise along the microtubule wall with the beta-tubulin subunit facing the microtubule plus end conferring a structural polarity. Microtubules usually have 13 protofilaments but different protofilament numbers can be found in some organisms and specialized cells. Requires Mg(2+) as cofactor. Post-translationally, undergoes a tyrosination/detyrosination cycle, the cyclic removal and re-addition of a C-terminal tyrosine residue by the enzymes tubulin tyrosine carboxypeptidase (TTCP) and tubulin tyrosine ligase (TTL), respectively. Acetylation of alpha chains at Lys-40 stabilizes microtubules and affects affinity and processivity of microtubule motors. This modification has a role in multiple cellular functions, ranging from cell motility, cell cycle progression or cell differentiation to intracellular trafficking and signaling.

It localises to the cytoplasm. Its subcellular location is the cytoskeleton. The enzyme catalyses GTP + H2O = GDP + phosphate + H(+). Functionally, tubulin is the major constituent of microtubules, a cylinder consisting of laterally associated linear protofilaments composed of alpha- and beta-tubulin heterodimers. Microtubules grow by the addition of GTP-tubulin dimers to the microtubule end, where a stabilizing cap forms. Below the cap, tubulin dimers are in GDP-bound state, owing to GTPase activity of alpha-tubulin. The sequence is that of Tubulin alpha-1 chain (TUBA1) from Zea mays (Maize).